The primary structure comprises 221 residues: Oxaloacetate tautomerase oaa1, mitochondrial (221 aa).

Residues glutamate 59, glutamate 61, and aspartate 93 each contribute to the Mg(2+) site.

It belongs to the FAH family. It depends on Mg(2+) as a cofactor. The cofactor is Mn(2+).

The protein localises to the mitochondrion. Its subcellular location is the cytoplasm. It catalyses the reaction oxaloacetate = enol-oxaloacetate. Tautomerase that converts enol-oxaloacetate, a strong inhibitor of succinate dehydrogenase, to the physiological keto form of oxaloacetate. The chain is Oxaloacetate tautomerase oaa1, mitochondrial from Schizosaccharomyces pombe (strain 972 / ATCC 24843) (Fission yeast).